A 115-amino-acid polypeptide reads, in one-letter code: Large ribosomal subunit protein bL20 (115 aa).

It belongs to the bacterial ribosomal protein bL20 family.

Its function is as follows. Binds directly to 23S ribosomal RNA and is necessary for the in vitro assembly process of the 50S ribosomal subunit. It is not involved in the protein synthesizing functions of that subunit. This is Large ribosomal subunit protein bL20 from Prochlorococcus marinus (strain SARG / CCMP1375 / SS120).